A 388-amino-acid chain; its full sequence is Leucine aminopeptidase 1 (388 aa).

A signal peptide spans 1–19; that stretch reads MKSLSLLALAAIAPPAAVA. Positions 20–88 are excised as a propeptide; the sequence is AVVDRQVPFE…SAKSHERIQV (69 aa). N-linked (GlcNAc...) asparagine glycosylation is present at Asn-180. Residues His-188, Asp-207, Glu-246, and Asp-273 each coordinate Zn(2+). Cys-322 and Cys-326 are disulfide-bonded. His-355 lines the Zn(2+) pocket.

Belongs to the peptidase M28 family. M28E subfamily. In terms of assembly, monomer. The cofactor is Zn(2+).

The protein localises to the secreted. Extracellular aminopeptidase that allows assimilation of proteinaceous substrates. The chain is Leucine aminopeptidase 1 (LAP1) from Coccidioides posadasii (strain C735) (Valley fever fungus).